The primary structure comprises 467 residues: GTPase Der (467 aa).

EngA-type G domains follow at residues 3-167 (PTLV…PYEE) and 179-352 (PVIA…AAAR). Residues 9–16 (GRPNVGKS), 56–60 (DTGGF), 119–122 (NKTE), 185–192 (GRPNVGKS), 232–236 (DTAGL), and 297–300 (NKWD) each bind GTP. The KH-like domain occupies 353 to 437 (AHIPTPKLTR…PLRVEFRTGH (85 aa)). The tract at residues 434 to 467 (RTGHNPYAGKKTPLTEEEARRAHSRRRRNRKKYG) is disordered. Residues 455-467 (AHSRRRRNRKKYG) are compositionally biased toward basic residues.

This sequence belongs to the TRAFAC class TrmE-Era-EngA-EngB-Septin-like GTPase superfamily. EngA (Der) GTPase family. Associates with the 50S ribosomal subunit.

GTPase that plays an essential role in the late steps of ribosome biogenesis. The polypeptide is GTPase Der (Nitrosomonas europaea (strain ATCC 19718 / CIP 103999 / KCTC 2705 / NBRC 14298)).